The chain runs to 182 residues: Core-binding factor subunit beta (182 aa).

A173 carries the post-translational modification Phosphoserine.

Belongs to the CBF-beta family. Heterodimer with RUNX1, RUNX2 and RUNX3. Interacts with COPRS. Found in a complex with PRMT5 and RUNX1. In terms of assembly, (Microbial infection) Interacts with HIV-1 Vif; forming an active cullin-5-RING E3 ubiquitin-protein ligase complex (ECS complex).

It localises to the nucleus. Its function is as follows. Forms the heterodimeric complex core-binding factor (CBF) with RUNX family proteins (RUNX1, RUNX2, and RUNX3). RUNX members modulate the transcription of their target genes through recognizing the core consensus binding sequence 5'-TGTGGT-3', or very rarely, 5'-TGCGGT-3', within their regulatory regions via their runt domain, while CBFB is a non-DNA-binding regulatory subunit that allosterically enhances the sequence-specific DNA-binding capacity of RUNX. The heterodimers bind to the core site of a number of enhancers and promoters, including murine leukemia virus, polyomavirus enhancer, T-cell receptor enhancers, LCK, IL3 and GM-CSF promoters. CBF complexes repress ZBTB7B transcription factor during cytotoxic (CD8+) T cell development. They bind to RUNX-binding sequence within the ZBTB7B locus acting as transcriptional silencer and allowing for cytotoxic T cell differentiation. Functionally, (Microbial infection) Following infection, hijacked by the HIV-1 Vif protein, leading to the formation a cullin-5-RING E3 ubiquitin-protein ligase complex (ECS complex) that catalyzes ubiquitination and degradation of APOBEC3F and APOBEC3G. The complex can also ubiquitinate APOBEC3H to some extent. Association with HIV-1 Vif protein also inhibits the transcription coactivator activity of CBFB/CBF-beta. In Homo sapiens (Human), this protein is Core-binding factor subunit beta (CBFB).